Consider the following 89-residue polypeptide: DNA-directed RNA polymerase subunit omega (89 aa).

This sequence belongs to the RNA polymerase subunit omega family. In terms of assembly, the RNAP catalytic core consists of 2 alpha, 1 beta, 1 beta' and 1 omega subunit. When a sigma factor is associated with the core the holoenzyme is formed, which can initiate transcription.

The enzyme catalyses RNA(n) + a ribonucleoside 5'-triphosphate = RNA(n+1) + diphosphate. Functionally, promotes RNA polymerase assembly. Latches the N- and C-terminal regions of the beta' subunit thereby facilitating its interaction with the beta and alpha subunits. The polypeptide is DNA-directed RNA polymerase subunit omega (Clavibacter michiganensis subsp. michiganensis (strain NCPPB 382)).